The sequence spans 62 residues: Small ribosomal subunit protein uS14 (62 aa).

4 residues coordinate Zn(2+): C25, C28, C41, and C44.

It belongs to the universal ribosomal protein uS14 family. Zinc-binding uS14 subfamily. Part of the 30S ribosomal subunit. Contacts proteins S3 and S10. Zn(2+) is required as a cofactor.

Binds 16S rRNA, required for the assembly of 30S particles and may also be responsible for determining the conformation of the 16S rRNA at the A site. In Hydrogenobaculum sp. (strain Y04AAS1), this protein is Small ribosomal subunit protein uS14.